Reading from the N-terminus, the 277-residue chain is Undecaprenyl-diphosphatase (277 aa).

The next 6 helical transmembrane spans lie at 88 to 108, 117 to 137, 157 to 179, 191 to 211, 227 to 247, and 255 to 275; these read MGWLVILGSLPIIVLGLLFQD, MWIVATMLIVFGMILAVADAV, FAQAMALIPGVSRSGGTITAGLL, SFLLAIPAVFGSGLYQLYKTV, LATVIAFVVGYVIIGWFLKFV, and FVWYRILLGLALYVLLGFNVI.

It belongs to the UppP family.

The protein localises to the cell membrane. It carries out the reaction di-trans,octa-cis-undecaprenyl diphosphate + H2O = di-trans,octa-cis-undecaprenyl phosphate + phosphate + H(+). Functionally, catalyzes the dephosphorylation of undecaprenyl diphosphate (UPP). Confers resistance to bacitracin. This Paenarthrobacter aurescens (strain TC1) protein is Undecaprenyl-diphosphatase.